The following is a 172-amino-acid chain: Xanthine-guanine phosphoribosyltransferase (172 aa).

Residues 47–48 (RG) and 106–114 (DDLVDTGKT) contribute to the 5-phospho-alpha-D-ribose 1-diphosphate site. Asp107 contacts Mg(2+). Residues Asp110 and Ile153 each contribute to the guanine site. Xanthine is bound by residues Asp110 and Ile153. Residues 110 to 114 (DTGKT) and 152 to 153 (WI) contribute to the GMP site.

The protein belongs to the purine/pyrimidine phosphoribosyltransferase family. XGPT subfamily. In terms of assembly, homotetramer. The cofactor is Mg(2+).

Its subcellular location is the cell inner membrane. The catalysed reaction is GMP + diphosphate = guanine + 5-phospho-alpha-D-ribose 1-diphosphate. It catalyses the reaction XMP + diphosphate = xanthine + 5-phospho-alpha-D-ribose 1-diphosphate. It carries out the reaction IMP + diphosphate = hypoxanthine + 5-phospho-alpha-D-ribose 1-diphosphate. It participates in purine metabolism; GMP biosynthesis via salvage pathway; GMP from guanine: step 1/1. The protein operates within purine metabolism; XMP biosynthesis via salvage pathway; XMP from xanthine: step 1/1. In terms of biological role, purine salvage pathway enzyme that catalyzes the transfer of the ribosyl-5-phosphate group from 5-phospho-alpha-D-ribose 1-diphosphate (PRPP) to the N9 position of the 6-oxopurines guanine and xanthine to form the corresponding ribonucleotides GMP (guanosine 5'-monophosphate) and XMP (xanthosine 5'-monophosphate), with the release of PPi. To a lesser extent, also acts on hypoxanthine. This chain is Xanthine-guanine phosphoribosyltransferase, found in Rhodopseudomonas palustris (strain HaA2).